The primary structure comprises 235 residues: 7-cyano-7-deazaguanine synthase (235 aa).

Residue 7–17 participates in ATP binding; the sequence is CSGGLDSVSLA. Zn(2+)-binding residues include C185, C193, C196, and C199.

Belongs to the QueC family. Zn(2+) serves as cofactor.

The enzyme catalyses 7-carboxy-7-deazaguanine + NH4(+) + ATP = 7-cyano-7-deazaguanine + ADP + phosphate + H2O + H(+). It functions in the pathway purine metabolism; 7-cyano-7-deazaguanine biosynthesis. In terms of biological role, catalyzes the ATP-dependent conversion of 7-carboxy-7-deazaguanine (CDG) to 7-cyano-7-deazaguanine (preQ(0)). This Allorhizobium ampelinum (strain ATCC BAA-846 / DSM 112012 / S4) (Agrobacterium vitis (strain S4)) protein is 7-cyano-7-deazaguanine synthase.